Consider the following 456-residue polypeptide: Sulfoacetaldehyde dehydrogenase (456 aa).

213-218 lines the NAD(+) pocket; it reads GGTAAA. Catalysis depends on residues E233 and C267.

It belongs to the aldehyde dehydrogenase family. In terms of assembly, homotetramer.

The catalysed reaction is sulfoacetaldehyde + NAD(+) + H2O = sulfoacetate + NADH + 2 H(+). In terms of biological role, mediates conversion of 2-sulfoacetaldehyde into sulfoacetate. The enzyme is specific for NAD; NADP is not a substrate. Part of a pathway that can utilize the amino group of taurine as a sole source of nitrogen for growth. The sequence is that of Sulfoacetaldehyde dehydrogenase (safD) from Neptuniibacter caesariensis.